A 390-amino-acid chain; its full sequence is Methionyl-tRNA formyltransferase, mitochondrial (390 aa).

The transit peptide at Met-1–Ser-33 directs the protein to the mitochondrion.

The protein belongs to the Fmt family.

It localises to the mitochondrion. The enzyme catalyses L-methionyl-tRNA(fMet) + (6R)-10-formyltetrahydrofolate = N-formyl-L-methionyl-tRNA(fMet) + (6S)-5,6,7,8-tetrahydrofolate + H(+). In terms of biological role, methionyl-tRNA formyltransferase that formylates methionyl-tRNA in mitochondria and is crucial for translation initiation. The chain is Methionyl-tRNA formyltransferase, mitochondrial (MTFMT) from Bos taurus (Bovine).